Consider the following 536-residue polypeptide: Phosphoenolpyruvate carboxykinase (ATP) (536 aa).

3 residues coordinate substrate: R61, Y195, and K201. Residues K201, H220, and 236-244 contribute to the ATP site; that span reads GLSGTGKTT. Mn(2+) contacts are provided by K201 and H220. D257 serves as a coordination point for Mn(2+). E285, R322, and T447 together coordinate ATP. R322 provides a ligand contact to substrate.

The protein belongs to the phosphoenolpyruvate carboxykinase (ATP) family. Mn(2+) serves as cofactor.

It localises to the cytoplasm. It carries out the reaction oxaloacetate + ATP = phosphoenolpyruvate + ADP + CO2. Its pathway is carbohydrate biosynthesis; gluconeogenesis. Its function is as follows. Involved in the gluconeogenesis. Catalyzes the conversion of oxaloacetate (OAA) to phosphoenolpyruvate (PEP) through direct phosphoryl transfer between the nucleoside triphosphate and OAA. This Rhizobium leguminosarum bv. trifolii (strain WSM2304) protein is Phosphoenolpyruvate carboxykinase (ATP).